Here is a 167-residue protein sequence, read N- to C-terminus: UPF0179 protein Pars_2336 (167 aa).

It belongs to the UPF0179 family.

This Pyrobaculum arsenaticum (strain DSM 13514 / JCM 11321 / PZ6) protein is UPF0179 protein Pars_2336.